The primary structure comprises 137 residues: uncharacterized protein (137 aa).

This sequence belongs to the DCC thiol-disulfide oxidoreductase family.

This is an uncharacterized protein from Bacillus subtilis (strain 168).